A 425-amino-acid polypeptide reads, in one-letter code: Adenylosuccinate synthetase (425 aa).

Residues 12–18 (GDEGKGK) and 40–42 (GHT) contribute to the GTP site. The active-site Proton acceptor is Asp-13. Residues Asp-13 and Gly-40 each coordinate Mg(2+). IMP is bound by residues 13-16 (DEGK), 38-41 (NAGH), Thr-129, Arg-143, Asn-221, Thr-236, and Arg-300. Catalysis depends on His-41, which acts as the Proton donor. A substrate-binding site is contributed by 296 to 302 (VTTGRKR). GTP-binding positions include Arg-302, 328–330 (KLD), and 410–412 (GVG).

Belongs to the adenylosuccinate synthetase family. As to quaternary structure, homodimer. The cofactor is Mg(2+).

Its subcellular location is the cytoplasm. It catalyses the reaction IMP + L-aspartate + GTP = N(6)-(1,2-dicarboxyethyl)-AMP + GDP + phosphate + 2 H(+). The protein operates within purine metabolism; AMP biosynthesis via de novo pathway; AMP from IMP: step 1/2. Functionally, plays an important role in the de novo pathway and in the salvage pathway of purine nucleotide biosynthesis. Catalyzes the first committed step in the biosynthesis of AMP from IMP. This is Adenylosuccinate synthetase from Phaeosphaeria nodorum (strain SN15 / ATCC MYA-4574 / FGSC 10173) (Glume blotch fungus).